A 226-amino-acid polypeptide reads, in one-letter code: V-type proton ATPase subunit E 1 (226 aa).

The residue at position 2 (Ala2) is an N-acetylalanine. Position 56 is a phosphotyrosine (Tyr56).

It belongs to the V-ATPase E subunit family. V-ATPase is a heteromultimeric enzyme made up of two complexes: the ATP-hydrolytic V1 complex and the proton translocation V0 complex. The V1 complex consists of three catalytic AB heterodimers that form a heterohexamer, three peripheral stalks each consisting of EG heterodimers, one central rotor including subunits D and F, and the regulatory subunits C and H. The proton translocation complex V0 consists of the proton transport subunit a, a ring of proteolipid subunits c9c'', rotary subunit d, subunits e and f, and the accessory subunits ATP6AP1/Ac45 and ATP6AP2/PRR. Interacts with RABL2/RABL2A; binds preferentially to GTP-bound RABL2. Interacts with ALDOC. Interacts with RAB11B. Expressed in brain (at protein level).

The protein localises to the apical cell membrane. It localises to the cytoplasmic vesicle. It is found in the secretory vesicle. The protein resides in the synaptic vesicle membrane. Its subcellular location is the clathrin-coated vesicle membrane. Its function is as follows. Subunit of the V1 complex of vacuolar(H+)-ATPase (V-ATPase), a multisubunit enzyme composed of a peripheral complex (V1) that hydrolyzes ATP and a membrane integral complex (V0) that translocates protons. V-ATPase is responsible for acidifying and maintaining the pH of intracellular compartments and in some cell types, is targeted to the plasma membrane, where it is responsible for acidifying the extracellular environment. The chain is V-type proton ATPase subunit E 1 (Atp6v1e1) from Rattus norvegicus (Rat).